Consider the following 952-residue polypeptide: Inner tegument protein (952 aa).

The interval 490-952 (WQLKPHTILQ…PPPTDPALTN (463 aa)) is interaction with large tegument protein.

Belongs to the herpesviridae inner tegument protein family. As to quaternary structure, interacts (via C-terminus) with the large tegument protein/LTP (via N-terminus).

It is found in the virion tegument. The protein localises to the host cytoplasm. It localises to the host nucleus. The protein resides in the host Golgi apparatus. Its subcellular location is the host trans-Golgi network. Its function is as follows. Plays an essential role in cytoplasmic secondary envelopment during viral egress. Interacts with the capsid via the large tegument protein/LTP and participates in its transport to the host trans-Golgi network (TGN) where secondary envelopment occurs. Modulates tegumentation and capsid accumulation at the viral assembly complex. The protein is Inner tegument protein (63) of Connochaetes taurinus (Blue wildebeest).